Here is a 205-residue protein sequence, read N- to C-terminus: Anaerobic dimethyl sulfoxide reductase chain B (205 aa).

4Fe-4S ferredoxin-type domains lie at 5-33 (YGFFIDSSRCTGCKTCELACKDYKDLTPE), 59-89 (FAYYLSISCNHCEDPACTKVCPSGAMHKRED), and 90-119 (GFVVVDEDVCIGCRYCHMACPYGAPQYNET). [4Fe-4S] cluster-binding residues include Cys14, Cys17, Cys20, Cys24, Cys67, Cys70, Cys75, Cys79, Cys99, Cys102, Cys105, Cys109, Cys126, Cys129, Cys141, and Cys145. Residues 184–205 (KPNANSRPTGDTTGYLANPKEV) are disordered. A compositionally biased stretch (polar residues) spans 186–195 (NANSRPTGDT).

In terms of assembly, heterotrimeric enzyme composed of a catalytic heterodimer (DmsAB) and a membrane anchor protein (DmsC). [4Fe-4S] cluster is required as a cofactor.

Electron transfer subunit of the terminal reductase during anaerobic growth on various sulfoxide and N-oxide compounds. In Escherichia coli (strain K12), this protein is Anaerobic dimethyl sulfoxide reductase chain B (dmsB).